The following is a 382-amino-acid chain: MSTWLLPENIADVLPSEARKIEELRRRLLDRFRSYGYEMVMPPLLEYLESLLTSGGADLRLRTFKLVDQLSGRTLGLRADITPQVARIDAHLLNRQGVTRLCYAGHVMHTRPRGLHATREQIQIGAEIYGHAGLEADLEIQQLMLDALHLAGLSRIRLDLCHAGVLAALLARDAQAAARGEALYDALSGKDVPLLHELTDDLGADTRAALRALPHLYGDASVLDEARARLPVLPEITRALDDLAQLAASAKGVEVAVDLADLRGYAYHSGAMFTAYIDGVPNAIARGGRYDHVGQAYGRARPATGFSLDLRELARISPVEARGTAILAPWAQDDALSAAVAALRDAGEVVIQALPGHDHVLDEFACDRSLVERAGAWVVEPR.

The protein belongs to the class-II aminoacyl-tRNA synthetase family. HisZ subfamily. Heteromultimer composed of HisG and HisZ subunits.

Its subcellular location is the cytoplasm. It functions in the pathway amino-acid biosynthesis; L-histidine biosynthesis; L-histidine from 5-phospho-alpha-D-ribose 1-diphosphate: step 1/9. Its function is as follows. Required for the first step of histidine biosynthesis. May allow the feedback regulation of ATP phosphoribosyltransferase activity by histidine. The sequence is that of ATP phosphoribosyltransferase regulatory subunit from Burkholderia vietnamiensis (strain G4 / LMG 22486) (Burkholderia cepacia (strain R1808)).